The primary structure comprises 282 residues: Probable endonuclease 4 (282 aa).

The Zn(2+) site is built by histidine 66, histidine 106, glutamate 143, aspartate 176, histidine 179, histidine 213, aspartate 226, histidine 228, and glutamate 258.

Belongs to the AP endonuclease 2 family. The cofactor is Zn(2+).

It carries out the reaction Endonucleolytic cleavage to 5'-phosphooligonucleotide end-products.. Endonuclease IV plays a role in DNA repair. It cleaves phosphodiester bonds at apurinic or apyrimidinic (AP) sites, generating a 3'-hydroxyl group and a 5'-terminal sugar phosphate. This Aquifex aeolicus (strain VF5) protein is Probable endonuclease 4.